The following is a 154-amino-acid chain: SsrA-binding protein (154 aa).

The protein belongs to the SmpB family.

It is found in the cytoplasm. Its function is as follows. Required for rescue of stalled ribosomes mediated by trans-translation. Binds to transfer-messenger RNA (tmRNA), required for stable association of tmRNA with ribosomes. tmRNA and SmpB together mimic tRNA shape, replacing the anticodon stem-loop with SmpB. tmRNA is encoded by the ssrA gene; the 2 termini fold to resemble tRNA(Ala) and it encodes a 'tag peptide', a short internal open reading frame. During trans-translation Ala-aminoacylated tmRNA acts like a tRNA, entering the A-site of stalled ribosomes, displacing the stalled mRNA. The ribosome then switches to translate the ORF on the tmRNA; the nascent peptide is terminated with the 'tag peptide' encoded by the tmRNA and targeted for degradation. The ribosome is freed to recommence translation, which seems to be the essential function of trans-translation. The polypeptide is SsrA-binding protein (Enterococcus hirae (strain ATCC 9790 / DSM 20160 / JCM 8729 / LMG 6399 / NBRC 3181 / NCIMB 6459 / NCDO 1258 / NCTC 12367 / WDCM 00089 / R)).